We begin with the raw amino-acid sequence, 452 residues long: tRNA modification GTPase MnmE (452 aa).

Arg-21, Glu-82, and Arg-121 together coordinate (6S)-5-formyl-5,6,7,8-tetrahydrofolate. The TrmE-type G domain occupies 217 to 373; the sequence is GINTTIIGKP…LENKIIEMFN (157 aa). Asn-227 lines the K(+) pocket. GTP contacts are provided by residues 227–232, 246–252, and 271–274; these read NVGKSS, TDIPGTT, and DTAG. A Mg(2+)-binding site is contributed by Ser-231. K(+)-binding residues include Thr-246, Ile-248, and Thr-251. Thr-252 contacts Mg(2+). Residue Lys-452 coordinates (6S)-5-formyl-5,6,7,8-tetrahydrofolate.

It belongs to the TRAFAC class TrmE-Era-EngA-EngB-Septin-like GTPase superfamily. TrmE GTPase family. As to quaternary structure, homodimer. Heterotetramer of two MnmE and two MnmG subunits. Requires K(+) as cofactor.

Its subcellular location is the cytoplasm. In terms of biological role, exhibits a very high intrinsic GTPase hydrolysis rate. Involved in the addition of a carboxymethylaminomethyl (cmnm) group at the wobble position (U34) of certain tRNAs, forming tRNA-cmnm(5)s(2)U34. The chain is tRNA modification GTPase MnmE from Finegoldia magna (strain ATCC 29328 / DSM 20472 / WAL 2508) (Peptostreptococcus magnus).